Here is a 313-residue protein sequence, read N- to C-terminus: Nematocyst expressed protein 8 (313 aa).

The first 19 residues, 1–19 (MLRRPLLLVLFTVFSTLYA), serve as a signal peptide directing secretion. The interval 24–56 (GVSPPTNESEAEVSPGDDEGPPEPGNEPDVNWR) is disordered. The span at 32–44 (SEAEVSPGDDEGP) shows a compositional bias: acidic residues. ShKT domains lie at 65-99 (CKDKGKDCESLADEGNCLKKLNYAVGNCPWTCRFC), 109-145 (CKDLAGERHCNGWKVKGDCVRLPDYMMQNCKLSCELC), and 151-186 (FKYTDEDVRCPEWAQAGYCSTNTDINLKCPHSCRKY). 7 disulfide bridges follow: Cys-65-Cys-99, Cys-72-Cys-92, Cys-81-Cys-96, Cys-109-Cys-145, Cys-127-Cys-142, Cys-160-Cys-179, and Cys-169-Cys-183. The segment covering 222 to 244 (TAAPSTQPAETTKAPPNTAAPTA) has biased composition (low complexity). The tract at residues 222–313 (TAAPSTQPAE…LCDEKHSSQQ (92 aa)) is disordered. A compositionally biased stretch (pro residues) spans 245 to 265 (APTPAPTPAPAPAPTPAPVAP). Over residues 280–297 (TPEEQDDNSADESTEIEA) the composition is skewed to acidic residues.

It belongs to the NEP3 family. As to expression, nematocytes. In late planulae, is only expressed in a handful of nematocytes in the lower pharynx. Is absent from the tentacles and outer body wall.

Its subcellular location is the nematocyst. It localises to the secreted. Functionally, probable toxin probably only used for predation. This chain is Nematocyst expressed protein 8, found in Nematostella vectensis (Starlet sea anemone).